Reading from the N-terminus, the 211-residue chain is Ribonuclease HII (211 aa).

The RNase H type-2 domain occupies 24-211; that stretch reads QLIAGVDEVG…KPVKKALGLD (188 aa). A divalent metal cation contacts are provided by D30, E31, and D122.

It belongs to the RNase HII family. It depends on Mn(2+) as a cofactor. Requires Mg(2+) as cofactor.

It is found in the cytoplasm. It carries out the reaction Endonucleolytic cleavage to 5'-phosphomonoester.. Endonuclease that specifically degrades the RNA of RNA-DNA hybrids. In Vibrio parahaemolyticus serotype O3:K6 (strain RIMD 2210633), this protein is Ribonuclease HII.